The chain runs to 519 residues: uncharacterized protein (519 aa).

Over residues 477–486 the composition is skewed to basic residues; the sequence is IKRERAHVTQ. Positions 477–519 are disordered; that stretch reads IKRERAHVTQRNKPPPSGGDTAVAEGFEPPDGVSRLSLSRRVH.

This is an uncharacterized protein from Mycobacterium tuberculosis (strain ATCC 25618 / H37Rv).